We begin with the raw amino-acid sequence, 62 residues long: Large ribosomal subunit protein uL30 (62 aa).

It belongs to the universal ribosomal protein uL30 family. Part of the 50S ribosomal subunit.

This is Large ribosomal subunit protein uL30 from Thioalkalivibrio sulfidiphilus (strain HL-EbGR7).